A 393-amino-acid chain; its full sequence is Protein TsgA (393 aa).

A run of 12 helical transmembrane segments spans residues 11 to 31 (WISF…GMVM), 51 to 71 (FLNA…EIVP), 78 to 98 (FGFI…SLAL), 101 to 121 (AAMF…TFLI), 134 to 154 (LLFT…VAAF), 162 to 182 (WYWV…LTFG), 206 to 226 (IGVL…LGFI), 245 to 265 (ALVS…SFIL), 273 to 293 (ILTV…TGTQ), 298 to 318 (WFIL…ITLG), 332 to 352 (FILT…GPIV), and 361 to 381 (LLTA…LGFV).

This sequence belongs to the major facilitator superfamily. TsgA family.

The protein resides in the cell inner membrane. This chain is Protein TsgA, found in Salmonella dublin (strain CT_02021853).